Reading from the N-terminus, the 125-residue chain is Prefoldin subunit beta (125 aa).

The protein belongs to the prefoldin subunit beta family. In terms of assembly, heterohexamer of two alpha and four beta subunits.

It localises to the cytoplasm. Its function is as follows. Molecular chaperone capable of stabilizing a range of proteins. Seems to fulfill an ATP-independent, HSP70-like function in archaeal de novo protein folding. This Pyrobaculum calidifontis (strain DSM 21063 / JCM 11548 / VA1) protein is Prefoldin subunit beta.